The following is a 144-amino-acid chain: MTEKVKKISPRRRARECAVQNLYSWAISKNSPEEIELNFIVDQDNEMKGVDMPYFRKLFHQTINHVETIDSTMAPYLDRDNVELDPIECAILRLAVYELKFELDVPYKVVINEAIEVAKVFGAEESHKYINGVLDKIAPALSRK.

Belongs to the NusB family.

Functionally, involved in transcription antitermination. Required for transcription of ribosomal RNA (rRNA) genes. Binds specifically to the boxA antiterminator sequence of the ribosomal RNA (rrn) operons. This Histophilus somni (strain 2336) (Haemophilus somnus) protein is Transcription antitermination protein NusB.